The chain runs to 182 residues: Fimbrial subunit type 1 (182 aa).

The N-terminal stretch at 1 to 23 (MKIKTLAIVVLSALSLSSAAALA) is a signal peptide. C44 and C84 are joined by a disulfide.

This sequence belongs to the fimbrial protein family.

The protein resides in the fimbrium. In Klebsiella pneumoniae, this protein is Fimbrial subunit type 1.